A 547-amino-acid polypeptide reads, in one-letter code: Phosphatidylinositol/phosphatidylcholine transfer protein SFH7 (547 aa).

The 175-residue stretch at 130-304 (EIDQVLKHYP…FFGGLCTCAD (175 aa)) folds into the CRAL-TRIO domain. Residues 464 to 526 (SSEYVIMVKR…KKALDETMVN (63 aa)) adopt a coiled-coil conformation.

It belongs to the SFH family.

The protein resides in the golgi apparatus membrane. The protein localises to the cell membrane. In terms of biological role, required for transport of secretory proteins from the Golgi complex. Catalyzes the transfer of phosphatidylinositol and phosphatidylcholine between membranes in vitro. This Arabidopsis thaliana (Mouse-ear cress) protein is Phosphatidylinositol/phosphatidylcholine transfer protein SFH7 (SFH7).